A 356-amino-acid chain; its full sequence is Monopolar spindle protein 2 (356 aa).

Residues 165–264 are a coiled coil; that stretch reads RRINRKYKSL…RILQEQIQFD (100 aa). A helical membrane pass occupies residues 285–305; it reads GAIAYVIPFLLFIFVIRSLIT.

Belongs to the MPS2 family.

Its subcellular location is the nucleus membrane. The protein localises to the cytoplasm. The protein resides in the cytoskeleton. It localises to the microtubule organizing center. It is found in the spindle pole body. Its function is as follows. Component of the spindle pole body (SPB) required for insertion of the nascent SPB into the nuclear envelope and for the proper execution of spindle pole body (SPB) duplication. The chain is Monopolar spindle protein 2 (MPS2) from Candida glabrata (strain ATCC 2001 / BCRC 20586 / JCM 3761 / NBRC 0622 / NRRL Y-65 / CBS 138) (Yeast).